A 97-amino-acid chain; its full sequence is Acylphosphatase (97 aa).

Residues 5–92 enclose the Acylphosphatase-like domain; sequence RAHVWISGRV…GEFVRFEITF (88 aa). Catalysis depends on residues arginine 20 and asparagine 38.

It belongs to the acylphosphatase family.

The enzyme catalyses an acyl phosphate + H2O = a carboxylate + phosphate + H(+). In Syntrophobacter fumaroxidans (strain DSM 10017 / MPOB), this protein is Acylphosphatase (acyP).